The sequence spans 124 residues: Small ribosomal subunit protein uS12 (124 aa).

Position 89 is a 3-methylthioaspartic acid (Asp89).

It belongs to the universal ribosomal protein uS12 family. As to quaternary structure, part of the 30S ribosomal subunit. Contacts proteins S8 and S17. May interact with IF1 in the 30S initiation complex.

In terms of biological role, with S4 and S5 plays an important role in translational accuracy. Its function is as follows. Interacts with and stabilizes bases of the 16S rRNA that are involved in tRNA selection in the A site and with the mRNA backbone. Located at the interface of the 30S and 50S subunits, it traverses the body of the 30S subunit contacting proteins on the other side and probably holding the rRNA structure together. The combined cluster of proteins S8, S12 and S17 appears to hold together the shoulder and platform of the 30S subunit. This is Small ribosomal subunit protein uS12 from Thermoanaerobacter pseudethanolicus (strain ATCC 33223 / 39E) (Clostridium thermohydrosulfuricum).